We begin with the raw amino-acid sequence, 354 residues long: Photosystem II protein D1 (354 aa).

Threonine 2 carries the post-translational modification N-acetylthreonine. A Phosphothreonine modification is found at threonine 2. A run of 3 helical transmembrane segments spans residues 29 to 46 (YIGW…TATS), 118 to 133 (HFLL…EWEL), and 142 to 156 (WIAV…AATA). Position 118 (histidine 118) interacts with chlorophyll a. Tyrosine 126 is a binding site for pheophytin a. Positions 170 and 189 each coordinate [CaMn4O5] cluster. The helical transmembrane segment at 197-218 (FHMLGVAGVFGGSLFSAMHGSL) threads the bilayer. Histidine 198 contacts chlorophyll a. A quinone is bound by residues histidine 215 and 264-265 (SF). Histidine 215 lines the Fe cation pocket. Residue histidine 272 coordinates Fe cation. A helical membrane pass occupies residues 274–288 (FLAAWPVVGIWFTAL). Residues histidine 332, glutamate 333, aspartate 342, and alanine 344 each coordinate [CaMn4O5] cluster. The propeptide occupies 345–354 (ASIEAPSLNG).

It belongs to the reaction center PufL/M/PsbA/D family. In terms of assembly, PSII is composed of 1 copy each of membrane proteins PsbA, PsbB, PsbC, PsbD, PsbE, PsbF, PsbH, PsbI, PsbJ, PsbK, PsbL, PsbM, PsbT, PsbX, PsbY, PsbZ, Psb30/Ycf12, at least 3 peripheral proteins of the oxygen-evolving complex and a large number of cofactors. It forms dimeric complexes. The D1/D2 heterodimer binds P680, chlorophylls that are the primary electron donor of PSII, and subsequent electron acceptors. It shares a non-heme iron and each subunit binds pheophytin, quinone, additional chlorophylls, carotenoids and lipids. D1 provides most of the ligands for the Mn4-Ca-O5 cluster of the oxygen-evolving complex (OEC). There is also a Cl(-1) ion associated with D1 and D2, which is required for oxygen evolution. The PSII complex binds additional chlorophylls, carotenoids and specific lipids. serves as cofactor. In terms of processing, tyr-161 forms a radical intermediate that is referred to as redox-active TyrZ, YZ or Y-Z. Post-translationally, C-terminally processed by CTPA; processing is essential to allow assembly of the oxygen-evolving complex and thus photosynthetic growth.

Its subcellular location is the plastid. It localises to the chloroplast thylakoid membrane. It carries out the reaction 2 a plastoquinone + 4 hnu + 2 H2O = 2 a plastoquinol + O2. Functionally, photosystem II (PSII) is a light-driven water:plastoquinone oxidoreductase that uses light energy to abstract electrons from H(2)O, generating O(2) and a proton gradient subsequently used for ATP formation. It consists of a core antenna complex that captures photons, and an electron transfer chain that converts photonic excitation into a charge separation. The D1/D2 (PsbA/PsbD) reaction center heterodimer binds P680, the primary electron donor of PSII as well as several subsequent electron acceptors. In Selaginella uncinata (Blue spike-moss), this protein is Photosystem II protein D1.